Reading from the N-terminus, the 501-residue chain is Phosphatidylinositol 4-kinase type 2-beta (501 aa).

2 disordered regions span residues 1–30 (MMAE…SSEV) and 65–122 (TELE…NHFP). A compositionally biased stretch (polar residues) spans 17 to 27 (GDSTPETNFLS). The segment covering 76–88 (ALLLPGPAGSLSP) has biased composition (low complexity). Polar residues predominate over residues 99 to 117 (NMLSSSSDNLASPGNSSGE). In terms of domain architecture, PI3K/PI4K catalytic spans 141-471 (GVFPERISQG…VQMPRVVVER (331 aa)). Positions 147–153 (ISQGSSG) are G-loop. ATP contacts are provided by Ser154 and Lys169. Positions 174–176 (EPY) are important for substrate binding. Residues 182–195 (KWTKYFHKVCCPCC) are important for interaction with membranes. Residues 278-281 (QLFV) and 292-293 (RK) each bind ATP. The interval 285–293 (HEADFWLRK) is important for interaction with membranes. The interval 322 to 330 (RNTDRGNDN) is catalytic loop. The tract at residues 362–382 (AIDNGLAFPFKHPDEWRAYPF) is activation loop. ATP is bound at residue Asp364. The interval 377 to 386 (WRAYPFHWAW) is important for interaction with membranes.

The protein belongs to the PI3/PI4-kinase family. Type II PI4K subfamily.

Its subcellular location is the cytoplasm. The protein resides in the cytosol. It localises to the golgi apparatus membrane. It is found in the endoplasmic reticulum membrane. The protein localises to the cell membrane. Its subcellular location is the early endosome membrane. The enzyme catalyses a 1,2-diacyl-sn-glycero-3-phospho-(1D-myo-inositol) + ATP = a 1,2-diacyl-sn-glycero-3-phospho-(1D-myo-inositol 4-phosphate) + ADP + H(+). Its function is as follows. Contributes to the overall PI4-kinase activity of the cell. This contribution may be especially significant in plasma membrane, endosomal and Golgi compartments. The phosphorylation of phosphatidylinositol (PI) to PI4P is the first committed step in the generation of phosphatidylinositol 4,5-bisphosphate (PIP2), a precursor of the second messenger inositol 1,4,5-trisphosphate (InsP3). This chain is Phosphatidylinositol 4-kinase type 2-beta (pi4k2b), found in Danio rerio (Zebrafish).